We begin with the raw amino-acid sequence, 290 residues long: L-cysteine S-thiosulfotransferase subunit SoxA (290 aa).

Positions 1–26 (MPRFTKTKGTLAATALGLALAGAAFA) are cleaved as a signal peptide. Positions 78 and 81 each coordinate Zn(2+). The 94-residue stretch at 78–171 (DDFDNPAMVF…DMLSLISLQS (94 aa)) folds into the Cytochrome c domain. Cys106, Cys109, His110, and Cys143 together coordinate heme c. Zn(2+) is bound at residue His190. Heme c contacts are provided by Cys206, Cys209, and His210. Position 247 (Arg247) interacts with substrate. Cys251 is a binding site for heme c. Residue Cys251 is the Cysteine persulfide intermediate of the active site. Asp266 is a binding site for Zn(2+).

This sequence belongs to the SoxA family. As to quaternary structure, heterodimer of SoxA and SoxX. The cofactor is heme c. It depends on Zn(2+) as a cofactor. Post-translationally, cysteine persulfide at Cys-251.

Its subcellular location is the periplasm. It carries out the reaction L-cysteinyl-[SoxY protein] + thiosulfate + 2 Fe(III)-[cytochrome c] = S-sulfosulfanyl-L-cysteinyl-[SoxY protein] + 2 Fe(II)-[cytochrome c] + 2 H(+). The enzyme catalyses S-sulfanyl-L-cysteinyl-[SoxY protein] + thiosulfate + 2 Fe(III)-[cytochrome c] = S-(2-sulfodisulfanyl)-L-cysteinyl-[SoxY protein] + 2 Fe(II)-[cytochrome c] + 2 H(+). C-type diheme cytochrome, which is part of the SoxAX cytochrome complex involved in sulfur oxidation. The SoxAX complex catalyzes the formation of a heterodisulfide bond between the conserved cysteine residue on a sulfur carrier SoxYZ complex subunit SoxY and thiosulfate or other inorganic sulfur substrates. This leads to the liberation of two electrons, which may be transferred from the SoxAX complex to another cytochrome c that then channels them into the respiratory electron transport chain. Some electrons may be used for reductive CO(2) fixation. This Paracoccus pantotrophus (Thiosphaera pantotropha) protein is L-cysteine S-thiosulfotransferase subunit SoxA.